Reading from the N-terminus, the 552-residue chain is 5'-AMP-activated protein kinase catalytic subunit alpha-2 (552 aa).

The region spanning tyrosine 16–phenylalanine 268 is the Protein kinase domain. Residues leucine 22–valine 30 and lysine 45 each bind ATP. Aspartate 139 functions as the Proton acceptor in the catalytic mechanism. A Phosphothreonine; by LKB1 and CaMKK2 modification is found at threonine 172. At threonine 258 the chain carries Phosphothreonine. The interval glutamate 291 to aspartate 376 is AIS. Residues serine 377 and serine 491 each carry the phosphoserine modification.

This sequence belongs to the protein kinase superfamily. CAMK Ser/Thr protein kinase family. SNF1 subfamily. As to quaternary structure, AMPK is a heterotrimer of an alpha catalytic subunit (PRKAA1 or PRKAA2), a beta (PRKAB1 or PRKAB2) and a gamma non-catalytic subunits (PRKAG1, PRKAG2 or PRKAG3). Interacts with FNIP1 and FNIP2. Interacts with DUSP29. Interacts with ARF6. The phosphorylated form at Thr-172 mediated by CamKK2 interacts with ACSS2. Mg(2+) serves as cofactor. In terms of processing, ubiquitinated. Phosphorylated at Thr-172 by STK11/LKB1 in complex with STE20-related adapter-alpha (STRADA) pseudo kinase and CAB39. Also phosphorylated at Thr-172 by CAMKK2; triggered by a rise in intracellular calcium ions, without detectable changes in the AMP/ATP ratio. CAMKK1 can also phosphorylate Thr-172, but at much lower level. Dephosphorylated by protein phosphatase 2A and 2C (PP2A and PP2C). Phosphorylated by ULK1; leading to negatively regulate AMPK activity and suggesting the existence of a regulatory feedback loop between ULK1 and AMPK. Dephosphorylated by PPM1A and PPM1B at Thr-172 (mediated by STK11/LKB1).

Its subcellular location is the cytoplasm. The protein resides in the nucleus. The catalysed reaction is L-seryl-[protein] + ATP = O-phospho-L-seryl-[protein] + ADP + H(+). It carries out the reaction L-threonyl-[protein] + ATP = O-phospho-L-threonyl-[protein] + ADP + H(+). The enzyme catalyses L-seryl-[acetyl-CoA carboxylase] + ATP = O-phospho-L-seryl-[acetyl-CoA carboxylase] + ADP + H(+). It catalyses the reaction L-seryl-[3-hydroxy-3-methylglutaryl-coenzyme A reductase] + ATP = O-phospho-L-seryl-[3-hydroxy-3-methylglutaryl-coenzyme A reductase] + ADP + H(+). Activated by phosphorylation on Thr-172. Binding of AMP to non-catalytic gamma subunit (PRKAG1, PRKAG2 or PRKAG3) results in allosteric activation, inducing phosphorylation on Thr-172. AMP-binding to gamma subunit also sustains activity by preventing dephosphorylation of Thr-172. ADP also stimulates Thr-172 phosphorylation, without stimulating already phosphorylated AMPK. ATP promotes dephosphorylation of Thr-172, rendering the enzyme inactive. Under physiological conditions AMPK mainly exists in its inactive form in complex with ATP, which is much more abundant than AMP. Selectively inhibited by compound C (6-[4-(2-Piperidin-1-yl-ethoxy)-phenyl)]-3-pyridin-4-yl-pyyrazolo[1,5-a] pyrimidine. Activated by resveratrol, a natural polyphenol present in red wine, and S17834, a synthetic polyphenol. Salicylate/aspirin directly activates kinase activity, primarily by inhibiting Thr-172 dephosphorylation. Catalytic subunit of AMP-activated protein kinase (AMPK), an energy sensor protein kinase that plays a key role in regulating cellular energy metabolism. In response to reduction of intracellular ATP levels, AMPK activates energy-producing pathways and inhibits energy-consuming processes: inhibits protein, carbohydrate and lipid biosynthesis, as well as cell growth and proliferation. AMPK acts via direct phosphorylation of metabolic enzymes, and by longer-term effects via phosphorylation of transcription regulators. Regulates lipid synthesis by phosphorylating and inactivating lipid metabolic enzymes such as ACACA, ACACB, GYS1, HMGCR and LIPE; regulates fatty acid and cholesterol synthesis by phosphorylating acetyl-CoA carboxylase (ACACA and ACACB) and hormone-sensitive lipase (LIPE) enzymes, respectively. Promotes lipolysis of lipid droplets by mediating phosphorylation of isoform 1 of CHKA (CHKalpha2). Regulates insulin-signaling and glycolysis by phosphorylating IRS1, PFKFB2 and PFKFB3. Involved in insulin receptor/INSR internalization. AMPK stimulates glucose uptake in muscle by increasing the translocation of the glucose transporter SLC2A4/GLUT4 to the plasma membrane, possibly by mediating phosphorylation of TBC1D4/AS160. Regulates transcription and chromatin structure by phosphorylating transcription regulators involved in energy metabolism such as CRTC2/TORC2, FOXO3, histone H2B, HDAC5, MEF2C, MLXIPL/ChREBP, EP300, HNF4A, p53/TP53, SREBF1, SREBF2 and PPARGC1A. Acts as a key regulator of glucose homeostasis in liver by phosphorylating CRTC2/TORC2, leading to CRTC2/TORC2 sequestration in the cytoplasm. In response to stress, phosphorylates 'Ser-36' of histone H2B (H2BS36ph), leading to promote transcription. Acts as a key regulator of cell growth and proliferation by phosphorylating FNIP1, TSC2, RPTOR, WDR24 and ATG1/ULK1: in response to nutrient limitation, negatively regulates the mTORC1 complex by phosphorylating RPTOR component of the mTORC1 complex and by phosphorylating and activating TSC2. Also phosphorylates and inhibits GATOR2 subunit WDR24 in response to nutrient limitation, leading to suppress glucose-mediated mTORC1 activation. In response to energetic stress, phosphorylates FNIP1, inactivating the non-canonical mTORC1 signaling, thereby promoting nuclear translocation of TFEB and TFE3, and inducing transcription of lysosomal or autophagy genes. In response to nutrient limitation, promotes autophagy by phosphorylating and activating ATG1/ULK1. In that process, it also activates WDR45/WIPI4. Phosphorylates CASP6, thereby preventing its autoprocessing and subsequent activation. AMPK also acts as a regulator of circadian rhythm by mediating phosphorylation of CRY1, leading to destabilize it. May regulate the Wnt signaling pathway by phosphorylating CTNNB1, leading to stabilize it. Also acts as a regulator of cellular polarity by remodeling the actin cytoskeleton; probably by indirectly activating myosin. Also phosphorylates CFTR, EEF2K, KLC1, NOS3 and SLC12A1. Plays an important role in the differential regulation of pro-autophagy (composed of PIK3C3, BECN1, PIK3R4 and UVRAG or ATG14) and non-autophagy (composed of PIK3C3, BECN1 and PIK3R4) complexes, in response to glucose starvation. Can inhibit the non-autophagy complex by phosphorylating PIK3C3 and can activate the pro-autophagy complex by phosphorylating BECN1. Upon glucose starvation, promotes ARF6 activation in a kinase-independent manner leading to cell migration. Upon glucose deprivation mediates the phosphorylation of ACSS2 at 'Ser-659', which exposes the nuclear localization signal of ACSS2, required for its interaction with KPNA1 and nuclear translocation. Upon stress, regulates mitochondrial fragmentation through phosphorylation of MTFR1L. The chain is 5'-AMP-activated protein kinase catalytic subunit alpha-2 from Mus musculus (Mouse).